The sequence spans 157 residues: Large ribosomal subunit protein mL59 (157 aa).

The protein belongs to the mitochondrion-specific ribosomal protein mL59 family. Component of the mitochondrial large ribosomal subunit (mt-LSU). Mature yeast 74S mitochondrial ribosomes consist of a small (37S) and a large (54S) subunit. The 37S small subunit contains a 15S ribosomal RNA (15S mt-rRNA) and 34 different proteins. The 54S large subunit contains a 21S rRNA (21S mt-rRNA) and 46 different proteins.

The protein resides in the mitochondrion. Functionally, component of the mitochondrial ribosome (mitoribosome), a dedicated translation machinery responsible for the synthesis of mitochondrial genome-encoded proteins, including at least some of the essential transmembrane subunits of the mitochondrial respiratory chain. The mitoribosomes are attached to the mitochondrial inner membrane and translation products are cotranslationally integrated into the membrane. This chain is Large ribosomal subunit protein mL59 (MRPL25), found in Saccharomyces cerevisiae (strain ATCC 204508 / S288c) (Baker's yeast).